We begin with the raw amino-acid sequence, 122 residues long: Ribosomal protein eL22-like (122 aa).

A phosphoserine mark is found at Ser-112, Ser-118, and Ser-120.

Belongs to the eukaryotic ribosomal protein eL22 family.

The polypeptide is Ribosomal protein eL22-like (RPL22L1) (Homo sapiens (Human)).